A 115-amino-acid polypeptide reads, in one-letter code: Basic leucine zipper transcriptional factor ATF-like (115 aa).

The disordered stretch occupies residues 1-57; it reads MQQEPDRNEQGYCSSPPSSNKQDSSDDTKKIQRREKNRIAAQKSRQRQTQKADSLHI. The region spanning 27 to 90 is the bZIP domain; the sequence is DTKKIQRREK…KYLTCVLSTH (64 aa). The segment at 29-51 is basic motif; that stretch reads KKIQRREKNRIAAQKSRQRQTQK. The tract at residues 55-83 is leucine-zipper; that stretch reads LHIESENLERLNSALRGEISGLREELKYL.

It belongs to the bZIP family.

The protein localises to the nucleus. The protein resides in the cytoplasm. Its function is as follows. AP-1 family transcription factor that controls the differentiation of lineage-specific cells in the immune system: specifically mediates the differentiation of T-helper 17 cells (Th17), follicular T-helper cells (TfH), CD8(+) dendritic cells and class-switch recombination (CSR) in B-cells. The chain is Basic leucine zipper transcriptional factor ATF-like (batf) from Xenopus tropicalis (Western clawed frog).